We begin with the raw amino-acid sequence, 663 residues long: Glutamate-rich protein 6 (663 aa).

2 disordered regions span residues 1-74 (MAHL…ETFS) and 106-136 (LTST…HKSF). Residues 20–69 (ESEEELEEEEEEEEVEEEEEEVEEEEEEVEEEEEEVVEEELVGEEQELEA) are compositionally biased toward acidic residues. Over residues 112 to 132 (PSQSATSTETPSASPPSSTSS) the composition is skewed to low complexity.

It belongs to the ERICH6 family.

Its subcellular location is the nucleus. In Homo sapiens (Human), this protein is Glutamate-rich protein 6 (ERICH6).